The following is a 373-amino-acid chain: Chaperone protein DnaJ (373 aa).

Residues 5–69 (DYYEVLGVNK…NKRANYDQFG (65 aa)) enclose the J domain. A CR-type zinc finger spans residues 130–212 (GTKKEISIKK…CKGKGTENKT (83 aa)). Zn(2+) is bound by residues C143, C146, C160, C163, C186, C189, C200, and C203. CXXCXGXG motif repeat units follow at residues 143–150 (CHTCNGDG), 160–167 (CSYCNGAG), 186–193 (CPKCEGSG), and 200–207 (CPTCKGKG).

The protein belongs to the DnaJ family. In terms of assembly, homodimer. It depends on Zn(2+) as a cofactor.

It is found in the cytoplasm. Its function is as follows. Participates actively in the response to hyperosmotic and heat shock by preventing the aggregation of stress-denatured proteins and by disaggregating proteins, also in an autonomous, DnaK-independent fashion. Unfolded proteins bind initially to DnaJ; upon interaction with the DnaJ-bound protein, DnaK hydrolyzes its bound ATP, resulting in the formation of a stable complex. GrpE releases ADP from DnaK; ATP binding to DnaK triggers the release of the substrate protein, thus completing the reaction cycle. Several rounds of ATP-dependent interactions between DnaJ, DnaK and GrpE are required for fully efficient folding. Also involved, together with DnaK and GrpE, in the DNA replication of plasmids through activation of initiation proteins. The chain is Chaperone protein DnaJ from Staphylococcus epidermidis (strain ATCC 12228 / FDA PCI 1200).